The following is a 329-amino-acid chain: GTPase Obg (329 aa).

An Obg domain is found at 1–159 (MQFIDQAIID…WSLQLELKLL (159 aa)). The OBG-type G domain occupies 160-328 (AEVGIIGLPN…LLSSIWNELG (169 aa)). ATP contacts are provided by residues 166–173 (GLPNAGKS), 191–195 (FTTLI), 213–216 (DIPG), 280–283 (NKKE), and 309–311 (SAV). Mg(2+) is bound by residues Ser-173 and Thr-193.

The protein belongs to the TRAFAC class OBG-HflX-like GTPase superfamily. OBG GTPase family. As to quaternary structure, monomer. Mg(2+) serves as cofactor.

The protein resides in the cytoplasm. In terms of biological role, an essential GTPase which binds GTP, GDP and possibly (p)ppGpp with moderate affinity, with high nucleotide exchange rates and a fairly low GTP hydrolysis rate. Plays a role in control of the cell cycle, stress response, ribosome biogenesis and in those bacteria that undergo differentiation, in morphogenesis control. The sequence is that of GTPase Obg from Prochlorococcus marinus (strain NATL2A).